Reading from the N-terminus, the 361-residue chain is UDP-N-acetylglucosamine--N-acetylmuramyl-(pentapeptide) pyrophosphoryl-undecaprenol N-acetylglucosamine transferase (361 aa).

UDP-N-acetyl-alpha-D-glucosamine-binding positions include 11-13, Asn120, Arg161, Ser188, and Gln282; that span reads TGG.

Belongs to the glycosyltransferase 28 family. MurG subfamily.

It localises to the cell inner membrane. The catalysed reaction is di-trans,octa-cis-undecaprenyl diphospho-N-acetyl-alpha-D-muramoyl-L-alanyl-D-glutamyl-meso-2,6-diaminopimeloyl-D-alanyl-D-alanine + UDP-N-acetyl-alpha-D-glucosamine = di-trans,octa-cis-undecaprenyl diphospho-[N-acetyl-alpha-D-glucosaminyl-(1-&gt;4)]-N-acetyl-alpha-D-muramoyl-L-alanyl-D-glutamyl-meso-2,6-diaminopimeloyl-D-alanyl-D-alanine + UDP + H(+). It functions in the pathway cell wall biogenesis; peptidoglycan biosynthesis. Its function is as follows. Cell wall formation. Catalyzes the transfer of a GlcNAc subunit on undecaprenyl-pyrophosphoryl-MurNAc-pentapeptide (lipid intermediate I) to form undecaprenyl-pyrophosphoryl-MurNAc-(pentapeptide)GlcNAc (lipid intermediate II). The polypeptide is UDP-N-acetylglucosamine--N-acetylmuramyl-(pentapeptide) pyrophosphoryl-undecaprenol N-acetylglucosamine transferase (Prochlorococcus marinus (strain MIT 9303)).